A 132-amino-acid chain; its full sequence is Thioredoxin H4-2 (132 aa).

In terms of domain architecture, Thioredoxin spans 18 to 130 (DFKGGNVHVI…LEKKVQALAD (113 aa)). Active-site nucleophile residues include C56 and C59. C56 and C59 are disulfide-bonded.

The protein belongs to the thioredoxin family. Plant H-type subfamily.

It localises to the cytoplasm. Functionally, probable thiol-disulfide oxidoreductase that may be involved in the redox regulation of a number of cytosolic enzymes. This chain is Thioredoxin H4-2, found in Oryza sativa subsp. japonica (Rice).